Reading from the N-terminus, the 318-residue chain is Deoxyribose-phosphate aldolase (318 aa).

Aspartate 155 (proton donor/acceptor) is an active-site residue. Lysine 218 functions as the Schiff-base intermediate with acetaldehyde in the catalytic mechanism. Catalysis depends on lysine 254, which acts as the Proton donor/acceptor.

The protein belongs to the DeoC/FbaB aldolase family. DeoC type 2 subfamily. Interacts with YBX1. As to expression, mainly expressed in liver, lung and colon.

It localises to the cytoplasm. It is found in the cytoplasmic granule. The protein resides in the nucleus. It carries out the reaction 2-deoxy-D-ribose 5-phosphate = D-glyceraldehyde 3-phosphate + acetaldehyde. It functions in the pathway carbohydrate degradation; 2-deoxy-D-ribose 1-phosphate degradation; D-glyceraldehyde 3-phosphate and acetaldehyde from 2-deoxy-alpha-D-ribose 1-phosphate: step 2/2. Functionally, catalyzes a reversible aldol reaction between acetaldehyde and D-glyceraldehyde 3-phosphate to generate 2-deoxy-D-ribose 5-phosphate. Participates in stress granule (SG) assembly. May allow ATP production from extracellular deoxyinosine in conditions of energy deprivation. This Homo sapiens (Human) protein is Deoxyribose-phosphate aldolase (DERA).